The following is a 188-amino-acid chain: Adenine phosphoribosyltransferase (188 aa).

Belongs to the purine/pyrimidine phosphoribosyltransferase family. In terms of assembly, homodimer.

The protein localises to the cytoplasm. The catalysed reaction is AMP + diphosphate = 5-phospho-alpha-D-ribose 1-diphosphate + adenine. It functions in the pathway purine metabolism; AMP biosynthesis via salvage pathway; AMP from adenine: step 1/1. Functionally, catalyzes a salvage reaction resulting in the formation of AMP, that is energically less costly than de novo synthesis. The sequence is that of Adenine phosphoribosyltransferase from Neisseria meningitidis serogroup A / serotype 4A (strain DSM 15465 / Z2491).